The following is an 894-amino-acid chain: Exocyst complex component 1 (894 aa).

2 coiled-coil regions span residues 152–199 and 205–259; these read GDEE…LQVL and QSIM…NHLI. The segment at 437 to 495 is disordered; sequence SKESKKFATLPRKESAVKQETESLHGSSGKLTGSTSSLNKLSVQSSGSRRSQSSSLLDM. Over residues 438-459 the composition is skewed to basic and acidic residues; sequence KESKKFATLPRKESAVKQETES. Positions 460–491 are enriched in low complexity; sequence LHGSSGKLTGSTSSLNKLSVQSSGSRRSQSSS. Ser-470 bears the Phosphoserine mark. Thr-471 carries the post-translational modification Phosphothreonine. Ser-473, Ser-487, and Ser-501 each carry phosphoserine.

It belongs to the SEC3 family. The exocyst complex is composed of EXOC1, EXOC2, EXOC3, EXOC4, EXOC5, EXOC6, EXOC7 and EXOC8. Interacts with EEF1A1. Interacts with SLC6A9; interaction increases the transporter capacity of SLC6A9 probably by promoting its insertion into the cell membrane.

The protein resides in the midbody. Its subcellular location is the midbody ring. It localises to the cytoplasm. It is found in the perinuclear region. The protein localises to the cell membrane. Its function is as follows. Component of the exocyst complex involved in the docking of exocytic vesicles with fusion sites on the plasma membrane. The polypeptide is Exocyst complex component 1 (Exoc1) (Mus musculus (Mouse)).